The sequence spans 163 residues: Interleukin-17F (163 aa).

A signal peptide spans 1 to 30; that stretch reads MTVKTLHGPAMVKYLLLSILGLAFLSEAAA. Asn-83 carries an N-linked (GlcNAc...) asparagine glycan. 2 cysteine pairs are disulfide-bonded: Cys-102–Cys-152 and Cys-107–Cys-154.

Belongs to the IL-17 family. As to quaternary structure, homodimer; disulfide-linked. Heterodimer with IL17A (IL17A-IL17F). Forms complexes with IL17RA and IL17RC receptors with 2:1 binding stoichiometry: two receptor chains for one interleukin molecule. IL17F homodimer forms predominantly complexes with IL17RC homodimer, whereas IL17A-IL17F favors complexes with IL17RA-IL17RC. IL17RA and IL17RC chains cannot distinguish between IL17A and IL17F molecules, potentially enabling the formation of topologically distinct complexes. In terms of tissue distribution, expressed in T-helper 1 and T-helper 2 cells, basophils and mast cells.

It localises to the secreted. Effector cytokine of innate and adaptive immune system involved in antimicrobial host defense and maintenance of tissue integrity. IL17A-IL17F signals via IL17RA-IL17RC heterodimeric receptor complex, triggering homotypic interaction of IL17RA and IL17RC chains with TRAF3IP2 adapter through SEFIR domains. This leads to downstream TRAF6-mediated activation of NF-kappa-B and MAPkinase pathways ultimately resulting in transcriptional activation of cytokines, chemokines, antimicrobial peptides and matrix metalloproteinases, with potential strong immune inflammation. IL17A-IL17F is primarily involved in host defense against extracellular bacteria and fungi by inducing neutrophilic inflammation. As signature effector cytokine of T-helper 17 cells (Th17), primarily induces neutrophil activation and recruitment at infection and inflammatory sites. Stimulates the production of antimicrobial beta-defensins DEFB1, DEFB103A, and DEFB104A by mucosal epithelial cells, limiting the entry of microbes through the epithelial barriers. IL17F homodimer can signal via IL17RC homodimeric receptor complex, triggering downstream activation of TRAF6 and NF-kappa-B signaling pathway. Via IL17RC induces transcriptional activation of IL33, a potent cytokine that stimulates group 2 innate lymphoid cells and adaptive T-helper 2 cells involved in pulmonary allergic response to fungi. Likely via IL17RC, promotes sympathetic innervation of peripheral organs by coordinating the communication between gamma-delta T cells and parenchymal cells. Stimulates sympathetic innervation of thermogenic adipose tissue by driving TGFB1 expression. Regulates the composition of intestinal microbiota and immune tolerance by inducing antimicrobial proteins that specifically control the growth of commensal Firmicutes and Bacteroidetes. The chain is Interleukin-17F (IL17F) from Homo sapiens (Human).